The chain runs to 121 residues: uncharacterized protein (121 aa).

Disordered stretches follow at residues 1–28 (MGCA…QNGD) and 60–81 (QENL…EIPG). Phosphoserine occurs at positions 95 and 115.

This is an uncharacterized protein from Mus musculus (Mouse).